A 273-amino-acid polypeptide reads, in one-letter code: Undecaprenyl-diphosphatase (273 aa).

7 helical membrane-spanning segments follow: residues 6–26 (SLLI…LPVS), 45–65 (AKTF…VMFW), 90–110 (LTLI…LLFH), 116–136 (LFNP…LIAA), 190–210 (YAAS…ATAL), 222–242 (GDIP…LIAI), and 252–272 (ISFI…YVVF).

It belongs to the UppP family.

Its subcellular location is the cell inner membrane. It carries out the reaction di-trans,octa-cis-undecaprenyl diphosphate + H2O = di-trans,octa-cis-undecaprenyl phosphate + phosphate + H(+). In terms of biological role, catalyzes the dephosphorylation of undecaprenyl diphosphate (UPP). Confers resistance to bacitracin. The chain is Undecaprenyl-diphosphatase from Escherichia coli O7:K1 (strain IAI39 / ExPEC).